Here is a 207-residue protein sequence, read N- to C-terminus: MSSRVFVRSLAAAAKAGVKPPIQLFGLEGTYASALFTAASKTTSIESAGKALASLSKTIAKDAKLGAILANPALPAGDRTVVVQTLAQKTPGMDAAVQNLMQVLAENNRLNLLQGVAGEFTKLTDAHNGLVQATVTTAQPLEGKLFRRVEKALAQSSFIGAGKTLKLENVVKPEIQGGLIVEVADRTVDLSIASRISKLNQVLKESI.

The protein belongs to the ATPase delta chain family. F-type ATPases have 2 components, CF(1) - the catalytic core - and CF(0) - the membrane proton channel. CF(1) has five subunits: alpha(3), beta(3), gamma(1), delta(1), epsilon(1). CF(0) has three main subunits: a, b and c.

The protein resides in the mitochondrion. It localises to the mitochondrion inner membrane. Its function is as follows. Mitochondrial membrane ATP synthase (F(1)F(0) ATP synthase or Complex V) produces ATP from ADP in the presence of a proton gradient across the membrane which is generated by electron transport complexes of the respiratory chain. F-type ATPases consist of two structural domains, F(1) - containing the extramembraneous catalytic core and F(0) - containing the membrane proton channel, linked together by a central stalk and a peripheral stalk. During catalysis, ATP synthesis in the catalytic domain of F(1) is coupled via a rotary mechanism of the central stalk subunits to proton translocation. Part of the complex F(0) domain and the peripheric stalk, which acts as a stator to hold the catalytic alpha(3)beta(3) subcomplex and subunit a/ATP6 static relative to the rotary elements. This Eremothecium gossypii (strain ATCC 10895 / CBS 109.51 / FGSC 9923 / NRRL Y-1056) (Yeast) protein is ATP synthase subunit 5, mitochondrial (ATP5).